The chain runs to 29 residues: GLWETIKNFGKKFTLNILHKLKCKIGGGC.

Residues cysteine 23 and cysteine 29 are joined by a disulfide bond.

Belongs to the frog skin active peptide (FSAP) family. Brevinin subfamily. In terms of tissue distribution, expressed by the skin glands.

It is found in the secreted. In terms of biological role, antibacterial activity against representative Gram-negative and Gram-positive bacteria. This is Brevinin-2Tc from Rana temporaria (European common frog).